The sequence spans 174 residues: Small ribosomal subunit protein uS5 (174 aa).

The 64-residue stretch at 19-82 (LREKMIAINR…EEARRNMTKI (64 aa)) folds into the S5 DRBM domain.

Belongs to the universal ribosomal protein uS5 family. As to quaternary structure, part of the 30S ribosomal subunit. Contacts proteins S4 and S8.

With S4 and S12 plays an important role in translational accuracy. In terms of biological role, located at the back of the 30S subunit body where it stabilizes the conformation of the head with respect to the body. This Albidiferax ferrireducens (strain ATCC BAA-621 / DSM 15236 / T118) (Rhodoferax ferrireducens) protein is Small ribosomal subunit protein uS5.